The following is a 450-amino-acid chain: tRNA-2-methylthio-N(6)-dimethylallyladenosine synthase (450 aa).

The MTTase N-terminal domain occupies 17 to 131; sequence KKFFVKTYGC…LNHVLDEVLA (115 aa). [4Fe-4S] cluster contacts are provided by C26, C62, C94, C168, C172, and C175. In terms of domain architecture, Radical SAM core spans 154–385; the sequence is REDQIKAYVS…LQLQDTIYMK (232 aa). In terms of domain architecture, TRAM spans 388-450; that stretch reads QAFLGQTVEV…SHQTLLGDLQ (63 aa).

It belongs to the methylthiotransferase family. MiaB subfamily. In terms of assembly, monomer. Requires [4Fe-4S] cluster as cofactor.

It is found in the cytoplasm. The enzyme catalyses N(6)-dimethylallyladenosine(37) in tRNA + (sulfur carrier)-SH + AH2 + 2 S-adenosyl-L-methionine = 2-methylsulfanyl-N(6)-dimethylallyladenosine(37) in tRNA + (sulfur carrier)-H + 5'-deoxyadenosine + L-methionine + A + S-adenosyl-L-homocysteine + 2 H(+). Functionally, catalyzes the methylthiolation of N6-(dimethylallyl)adenosine (i(6)A), leading to the formation of 2-methylthio-N6-(dimethylallyl)adenosine (ms(2)i(6)A) at position 37 in tRNAs that read codons beginning with uridine. This chain is tRNA-2-methylthio-N(6)-dimethylallyladenosine synthase, found in Protochlamydia amoebophila (strain UWE25).